Reading from the N-terminus, the 418-residue chain is Tryptophan synthase beta chain 1 (418 aa).

Lys-99 is modified (N6-(pyridoxal phosphate)lysine).

It belongs to the TrpB family. In terms of assembly, tetramer of two alpha and two beta chains. Requires pyridoxal 5'-phosphate as cofactor.

The catalysed reaction is (1S,2R)-1-C-(indol-3-yl)glycerol 3-phosphate + L-serine = D-glyceraldehyde 3-phosphate + L-tryptophan + H2O. It participates in amino-acid biosynthesis; L-tryptophan biosynthesis; L-tryptophan from chorismate: step 5/5. Its function is as follows. The beta subunit is responsible for the synthesis of L-tryptophan from indole and L-serine. The chain is Tryptophan synthase beta chain 1 (trpB1) from Corynebacterium efficiens (strain DSM 44549 / YS-314 / AJ 12310 / JCM 11189 / NBRC 100395).